The sequence spans 174 residues: Peptide methionine sulfoxide reductase MsrA (174 aa).

The active site involves C10.

It belongs to the MsrA Met sulfoxide reductase family.

The catalysed reaction is L-methionyl-[protein] + [thioredoxin]-disulfide + H2O = L-methionyl-(S)-S-oxide-[protein] + [thioredoxin]-dithiol. It carries out the reaction [thioredoxin]-disulfide + L-methionine + H2O = L-methionine (S)-S-oxide + [thioredoxin]-dithiol. Its function is as follows. Has an important function as a repair enzyme for proteins that have been inactivated by oxidation. Catalyzes the reversible oxidation-reduction of methionine sulfoxide in proteins to methionine. The sequence is that of Peptide methionine sulfoxide reductase MsrA from Arthrobacter sp. (strain FB24).